An 82-amino-acid chain; its full sequence is Small ribosomal subunit protein bS16 (82 aa).

It belongs to the bacterial ribosomal protein bS16 family.

The protein is Small ribosomal subunit protein bS16 of Clostridium botulinum (strain ATCC 19397 / Type A).